Reading from the N-terminus, the 87-residue chain is Small ribosomal subunit protein uS15 (87 aa).

It belongs to the universal ribosomal protein uS15 family. In terms of assembly, part of the 30S ribosomal subunit. Forms a bridge to the 50S subunit in the 70S ribosome, contacting the 23S rRNA.

One of the primary rRNA binding proteins, it binds directly to 16S rRNA where it helps nucleate assembly of the platform of the 30S subunit by binding and bridging several RNA helices of the 16S rRNA. Its function is as follows. Forms an intersubunit bridge (bridge B4) with the 23S rRNA of the 50S subunit in the ribosome. The polypeptide is Small ribosomal subunit protein uS15 (Acetivibrio thermocellus (strain ATCC 27405 / DSM 1237 / JCM 9322 / NBRC 103400 / NCIMB 10682 / NRRL B-4536 / VPI 7372) (Clostridium thermocellum)).